The chain runs to 264 residues: S-adenosylmethionine decarboxylase proenzyme (264 aa).

Residue S112 is the Schiff-base intermediate with substrate; via pyruvic acid of the active site. S112 carries the post-translational modification Pyruvic acid (Ser); by autocatalysis. Catalysis depends on H117, which acts as the Proton acceptor; for processing activity. C140 serves as the catalytic Proton donor; for catalytic activity.

The protein belongs to the prokaryotic AdoMetDC family. Type 2 subfamily. As to quaternary structure, heterooctamer of four alpha and four beta chains arranged as a tetramer of alpha/beta heterodimers. Requires pyruvate as cofactor. Post-translationally, is synthesized initially as an inactive proenzyme. Formation of the active enzyme involves a self-maturation process in which the active site pyruvoyl group is generated from an internal serine residue via an autocatalytic post-translational modification. Two non-identical subunits are generated from the proenzyme in this reaction, and the pyruvate is formed at the N-terminus of the alpha chain, which is derived from the carboxyl end of the proenzyme. The post-translation cleavage follows an unusual pathway, termed non-hydrolytic serinolysis, in which the side chain hydroxyl group of the serine supplies its oxygen atom to form the C-terminus of the beta chain, while the remainder of the serine residue undergoes an oxidative deamination to produce ammonia and the pyruvoyl group blocking the N-terminus of the alpha chain.

The enzyme catalyses S-adenosyl-L-methionine + H(+) = S-adenosyl 3-(methylsulfanyl)propylamine + CO2. It functions in the pathway amine and polyamine biosynthesis; S-adenosylmethioninamine biosynthesis; S-adenosylmethioninamine from S-adenosyl-L-methionine: step 1/1. Functionally, catalyzes the decarboxylation of S-adenosylmethionine to S-adenosylmethioninamine (dcAdoMet), the propylamine donor required for the synthesis of the polyamines spermine and spermidine from the diamine putrescine. The polypeptide is S-adenosylmethionine decarboxylase proenzyme (Salmonella gallinarum (strain 287/91 / NCTC 13346)).